Reading from the N-terminus, the 64-residue chain is Small ribosomal subunit protein eS17 (64 aa).

The protein belongs to the eukaryotic ribosomal protein eS17 family.

The protein is Small ribosomal subunit protein eS17 of Methanococcoides burtonii (strain DSM 6242 / NBRC 107633 / OCM 468 / ACE-M).